A 262-amino-acid polypeptide reads, in one-letter code: Encapsulin nanocompartment protein Rv1762c (262 aa).

The protein belongs to the UPF0145 family.

The protein resides in the encapsulin nanocompartment. In terms of biological role, cargo protein of a type 1 encapsulin nanocompartment possibly involved in protection against oxidative stress. The sequence is that of Encapsulin nanocompartment protein Rv1762c from Mycobacterium tuberculosis (strain ATCC 25618 / H37Rv).